The sequence spans 219 residues: UPF0502 protein Gura_0277 (219 aa).

The protein belongs to the UPF0502 family.

This Geotalea uraniireducens (strain Rf4) (Geobacter uraniireducens) protein is UPF0502 protein Gura_0277.